A 39-amino-acid chain; its full sequence is Photosystem II reaction center protein X (39 aa).

Residues 10-30 (WSLLWGTAIVVIPVTVGLIFI) form a helical membrane-spanning segment.

The protein belongs to the PsbX family. Type 1 subfamily. As to quaternary structure, PSII is composed of 1 copy each of membrane proteins PsbA, PsbB, PsbC, PsbD, PsbE, PsbF, PsbH, PsbI, PsbJ, PsbK, PsbL, PsbM, PsbT, PsbX, PsbY, PsbZ, Psb30/Ycf12, peripheral proteins PsbO, CyanoQ (PsbQ), PsbU, PsbV and a large number of cofactors. It forms dimeric complexes.

It localises to the cellular thylakoid membrane. Functionally, involved in the binding and/or turnover of quinones at the Q(B) site of photosystem II (PSII). PSII is a light-driven water plastoquinone oxidoreductase, using light energy to abstract electrons from H(2)O, generating a proton gradient subsequently used for ATP formation. The protein is Photosystem II reaction center protein X of Nostoc punctiforme (strain ATCC 29133 / PCC 73102).